We begin with the raw amino-acid sequence, 463 residues long: Quinolone resistance protein NorB (463 aa).

The next 14 membrane-spanning stretches (helical) occupy residues 17-37 (IGIVLSVITFWLFAQSLVNVV), 53-73 (IAVSITALFSGMFVVGAGGLA), 86-106 (IILNILGSLLIIISNIPLLLI), 107-127 (IGRLIQGLSAACIMPATLSII), 142-162 (YWSIGSWGGSGVCSFFGGAVA), 165-185 (LGWRWIFILSIIISLIALFLI), 201-221 (FDIKGLVLLVIMLLSLNILIT), 230-250 (SLLFITLLAIAIGSFSLFIVL), 273-293 (TASNFLLNGVAGTLIVANTFV), 299-319 (YSSLQAGSLSITYLVMVLIMI), 334-354 (PMLIGTGVLIVGECLISLTFL), 357-377 (IFYVICCIIGYLFFGLGLGIY), 403-423 (MASALGGAFGVALSGAVYAIV), and 435-455 (IALWLNAAMGILSFVIILLLV).

It belongs to the major facilitator superfamily. TCR/Tet family.

The protein resides in the cell membrane. In terms of biological role, multidrug efflux pump that acts independently of NorA and is one of the factors that confers resistance against diverse quinolones and chemical compounds. The sequence is that of Quinolone resistance protein NorB (norB) from Staphylococcus aureus (strain COL).